The primary structure comprises 593 residues: DNA mismatch repair protein MutL (593 aa).

It belongs to the DNA mismatch repair MutL/HexB family.

Its function is as follows. This protein is involved in the repair of mismatches in DNA. It is required for dam-dependent methyl-directed DNA mismatch repair. May act as a 'molecular matchmaker', a protein that promotes the formation of a stable complex between two or more DNA-binding proteins in an ATP-dependent manner without itself being part of a final effector complex. In Leptospira interrogans serogroup Icterohaemorrhagiae serovar copenhageni (strain Fiocruz L1-130), this protein is DNA mismatch repair protein MutL.